A 573-amino-acid chain; its full sequence is Proline--tRNA ligase (573 aa).

The protein belongs to the class-II aminoacyl-tRNA synthetase family. ProS type 1 subfamily. In terms of assembly, homodimer.

The protein localises to the cytoplasm. The enzyme catalyses tRNA(Pro) + L-proline + ATP = L-prolyl-tRNA(Pro) + AMP + diphosphate. In terms of biological role, catalyzes the attachment of proline to tRNA(Pro) in a two-step reaction: proline is first activated by ATP to form Pro-AMP and then transferred to the acceptor end of tRNA(Pro). As ProRS can inadvertently accommodate and process non-cognate amino acids such as alanine and cysteine, to avoid such errors it has two additional distinct editing activities against alanine. One activity is designated as 'pretransfer' editing and involves the tRNA(Pro)-independent hydrolysis of activated Ala-AMP. The other activity is designated 'posttransfer' editing and involves deacylation of mischarged Ala-tRNA(Pro). The misacylated Cys-tRNA(Pro) is not edited by ProRS. The polypeptide is Proline--tRNA ligase (Chromohalobacter salexigens (strain ATCC BAA-138 / DSM 3043 / CIP 106854 / NCIMB 13768 / 1H11)).